We begin with the raw amino-acid sequence, 160 residues long: MSEAKKYVMTYEGVKKLEEELEYLKTVKRKEITEKIKVALSFGDLSENSEYDEAKNEQAFVEGRIIQLENMLKNASIVDENEVPKDIVSVGSIVKVKDYEFDEEVEYIIVGSAEADPMNNKISNESPVGHGLIGKKVGDIIEVTVPDGVSKYEILEVNRA.

A coiled-coil region spans residues 14 to 76 (VKKLEEELEY…QLENMLKNAS (63 aa)).

Belongs to the GreA/GreB family.

Functionally, necessary for efficient RNA polymerase transcription elongation past template-encoded arresting sites. The arresting sites in DNA have the property of trapping a certain fraction of elongating RNA polymerases that pass through, resulting in locked ternary complexes. Cleavage of the nascent transcript by cleavage factors such as GreA or GreB allows the resumption of elongation from the new 3'terminus. GreA releases sequences of 2 to 3 nucleotides. This chain is Transcription elongation factor GreA, found in Clostridium botulinum (strain Okra / Type B1).